The sequence spans 691 residues: Transcription termination factor Rho (691 aa).

Residues Ile48 to Glu303 form a disordered region. The segment covering Asp50–Glu64 has biased composition (basic and acidic residues). Low complexity-rich tracts occupy residues Arg65–Glu92 and Asp105–Ala119. 2 stretches are compositionally biased toward basic and acidic residues: residues Glu120–Arg158 and Asp188–Arg273. Positions Leu307–Pro390 constitute a Rho RNA-BD domain. Residues Gly433–Gly438, Lys445–Met450, and Arg476 each bind ATP.

This sequence belongs to the Rho family. Homohexamer. The homohexamer assembles into an open ring structure.

Functionally, facilitates transcription termination by a mechanism that involves Rho binding to the nascent RNA, activation of Rho's RNA-dependent ATPase activity, and release of the mRNA from the DNA template. The sequence is that of Transcription termination factor Rho from Micrococcus luteus (Micrococcus lysodeikticus).